The primary structure comprises 468 residues: 6-phospho-beta-galactosidase (468 aa).

D-galactose 6-phosphate is bound by residues Q19, H116, N159, E160, and N297. E160 acts as the Proton donor in catalysis. Catalysis depends on E375, which acts as the Nucleophile. Positions 428, 429, 435, and 437 each coordinate D-galactose 6-phosphate.

It belongs to the glycosyl hydrolase 1 family.

It carries out the reaction a 6-phospho-beta-D-galactoside + H2O = D-galactose 6-phosphate + an alcohol. It functions in the pathway carbohydrate metabolism; lactose degradation; D-galactose 6-phosphate and beta-D-glucose from lactose 6-phosphate: step 1/1. This chain is 6-phospho-beta-galactosidase, found in Streptococcus pyogenes serotype M5 (strain Manfredo).